A 128-amino-acid chain; its full sequence is Cytochrome c-type biogenesis protein CcmE (128 aa).

Residues Met1–Arg8 are Cytoplasmic-facing. A helical; Signal-anchor for type II membrane protein transmembrane segment spans residues Leu9–Asn29. At Leu30 to Gln128 the chain is on the extracellular side. 2 residues coordinate heme: His120 and Tyr124.

The protein belongs to the CcmE/CycJ family.

It localises to the cell membrane. Functionally, heme chaperone required for the biogenesis of c-type cytochromes. Transiently binds heme delivered by CcmC and transfers the heme to apo-cytochromes in a process facilitated by CcmF and CcmH. In Rickettsia africae (strain ESF-5), this protein is Cytochrome c-type biogenesis protein CcmE.